The primary structure comprises 148 residues: Hemoglobin subunit beta-1 (148 aa).

One can recognise a Globin domain in the interval 3–148; that stretch reads EWTDAERTAI…VVSALCRQYH (146 aa). The heme b site is built by His-64 and His-93.

As to quaternary structure, heterotetramer of two alpha chains and two beta chains. In terms of tissue distribution, red blood cells.

Involved in oxygen transport from gills to the various peripheral tissues. In Danio rerio (Zebrafish), this protein is Hemoglobin subunit beta-1 (ba1).